We begin with the raw amino-acid sequence, 634 residues long: DNA-directed RNA polymerase subunit gamma (634 aa).

Zn(2+) is bound by residues Cys74, Cys76, Cys89, and Cys92. Residues Asp471, Asp473, and Asp475 each contribute to the Mg(2+) site.

It belongs to the RNA polymerase beta' chain family. RpoC1 subfamily. As to quaternary structure, in cyanobacteria the RNAP catalytic core is composed of 2 alpha, 1 beta, 1 beta', 1 gamma and 1 omega subunit. When a sigma factor is associated with the core the holoenzyme is formed, which can initiate transcription. Mg(2+) is required as a cofactor. It depends on Zn(2+) as a cofactor.

It carries out the reaction RNA(n) + a ribonucleoside 5'-triphosphate = RNA(n+1) + diphosphate. Its function is as follows. DNA-dependent RNA polymerase catalyzes the transcription of DNA into RNA using the four ribonucleoside triphosphates as substrates. This chain is DNA-directed RNA polymerase subunit gamma, found in Synechococcus sp. (strain RCC307).